Reading from the N-terminus, the 56-residue chain is Small ribosomal subunit protein bS21 (56 aa).

It belongs to the bacterial ribosomal protein bS21 family.

The sequence is that of Small ribosomal subunit protein bS21 from Synechococcus sp. (strain WH7803).